Consider the following 339-residue polypeptide: MRNKILKKSKSILPGLFICLIIGIIAEFLGKSFPTIGAATFAIFMGIFLGNTLFKSDKYDEGTKFSEKDLLNYSIVLMGASLNIIDIMALGFNGVFYIAILMTLTICTTYFIGRKLGFGEKYSLLMSAGNAVCGSSAIGSVSPVIKAKDSDKVIAITIVNVTGTILMILLPLITSILYNNDVLQSSALMGGILQSVGQVIGSAKFIGDPVVELATVFKIIRIIFLVVVVLVFAKIEVNEENKEEIAHHHKPTHKVRIPWFIIGFFIICILNSIGIIPGILGRTFKWISSNFEIIALAGIGMRVKIGDLVKEGPKAMLYGGLVGVCQIIFALSLINIFIK.

The next 8 helical transmembrane spans lie at I12–G30, T35–F54, L90–I112, Y122–V144, I156–Y178, V210–F232, W259–G281, and M316–I338.

It belongs to the UPF0324 family.

Its subcellular location is the cell membrane. The polypeptide is UPF0324 membrane protein CPE0129 (Clostridium perfringens (strain 13 / Type A)).